Reading from the N-terminus, the 259-residue chain is GTP cyclohydrolase FolE2 (259 aa).

Belongs to the GTP cyclohydrolase IV family.

It catalyses the reaction GTP + H2O = 7,8-dihydroneopterin 3'-triphosphate + formate + H(+). It functions in the pathway cofactor biosynthesis; 7,8-dihydroneopterin triphosphate biosynthesis; 7,8-dihydroneopterin triphosphate from GTP: step 1/1. Functionally, converts GTP to 7,8-dihydroneopterin triphosphate. This Nitratidesulfovibrio vulgaris (strain DSM 19637 / Miyazaki F) (Desulfovibrio vulgaris) protein is GTP cyclohydrolase FolE2.